The chain runs to 196 residues: Metalloproteinase inhibitor 2 (196 aa).

The N-terminal stretch at 1-2 (RA) is a signal peptide. Zn(2+) is bound at residue cysteine 3. Involved in metalloproteinase-binding stretches follow at residues 3–6 (CSCS) and 71–72 (SA). 6 cysteine pairs are disulfide-bonded: cysteine 3–cysteine 74, cysteine 5–cysteine 103, cysteine 15–cysteine 128, cysteine 130–cysteine 177, cysteine 135–cysteine 140, and cysteine 148–cysteine 169. One can recognise an NTR domain in the interval 3–128 (CSCSPVHPQQ…SLNHRYQMGC (126 aa)).

This sequence belongs to the protease inhibitor I35 (TIMP) family. In terms of assembly, interacts (via the C-terminal) with MMP2 (via the C-terminal PEX domain); the interaction inhibits the MMP2 activity. The activity of TIMP2 is dependent on the presence of disulfide bonds.

It localises to the secreted. Complexes with metalloproteinases (such as collagenases) and irreversibly inactivates them by binding to their catalytic zinc cofactor. The protein is Metalloproteinase inhibitor 2 (TIMP2) of Cricetulus longicaudatus (Long-tailed dwarf hamster).